We begin with the raw amino-acid sequence, 568 residues long: DEAD-box ATP-dependent RNA helicase 51 (568 aa).

2 stretches are compositionally biased toward basic and acidic residues: residues 1–13 (MVES…EELK) and 23–47 (KKNE…TQKK). The disordered stretch occupies residues 1-70 (MVESDKSSVE…EEEEKVEAME (70 aa)). A coiled-coil region spans residues 13–78 (KKRVRKRSRG…MEDGEDEKNI (66 aa)). Positions 60 to 70 (EEEEEKVEAME) are enriched in acidic residues. Residues 89–117 (VTFDSLDLSEQTSIAIKEMGFQYMTQIQA) carry the Q motif motif. The Helicase ATP-binding domain occupies 120–295 (IQPLLEGKDV…RVSLTSPVHV (176 aa)). 133 to 140 (ARTGSGKT) contributes to the ATP binding site. Positions 243–246 (DEAD) match the DEAD box motif. The Helicase C-terminal domain occupies 321–468 (RLILLISFLK…ELEFNEKRLS (148 aa)). The disordered stretch occupies residues 540-568 (KVRKARKQQGRNGFSPYSPYGKSTPTKEA).

This sequence belongs to the DEAD box helicase family. DDX18/HAS1 subfamily.

It catalyses the reaction ATP + H2O = ADP + phosphate + H(+). This is DEAD-box ATP-dependent RNA helicase 51 (RH51) from Arabidopsis thaliana (Mouse-ear cress).